We begin with the raw amino-acid sequence, 418 residues long: Arginine deiminase (418 aa).

The active-site Amidino-cysteine intermediate is the cysteine 406.

This sequence belongs to the arginine deiminase family.

It localises to the cytoplasm. It catalyses the reaction L-arginine + H2O = L-citrulline + NH4(+). Its pathway is amino-acid degradation; L-arginine degradation via ADI pathway; carbamoyl phosphate from L-arginine: step 1/2. The polypeptide is Arginine deiminase (Lentilactobacillus hilgardii (Lactobacillus hilgardii)).